We begin with the raw amino-acid sequence, 710 residues long: DNA topoisomerase 1 (710 aa).

A disordered region spans residues 1–22 (MPTSTKSKTKTTTKKKTTRKRV). The segment covering 7-22 (SKTKTTTKKKTTRKRV) has biased composition (basic residues). Positions 26–136 (KNLVIVESPA…EKNRVVFNEI (111 aa)) constitute a Toprim domain. Glutamate 32 and aspartate 105 together coordinate Mg(2+). The Topo IA-type catalytic domain maps to 152–574 (DVDLVDAQQA…QFYKPFAKEL (423 aa)). The segment at 186–191 (SAGRVQ) is interaction with DNA. The O-(5'-phospho-DNA)-tyrosine intermediate role is filled by tyrosine 321. 2 consecutive C4-type zinc fingers follow at residues 595–621 (CDVCGSPMVIKLGRFGKFYACSNFPDC) and 635–663 (CPLCHEGNIIERKTKKNRIFYGCDRYPDC). Residues 676-702 (CPKSGHFLVEKKVRGGGKQVVCSNDEC) form a C4-type 3; atypical zinc finger.

The protein belongs to the type IA topoisomerase family. As to quaternary structure, monomer. Mg(2+) is required as a cofactor.

It carries out the reaction ATP-independent breakage of single-stranded DNA, followed by passage and rejoining.. Releases the supercoiling and torsional tension of DNA, which is introduced during the DNA replication and transcription, by transiently cleaving and rejoining one strand of the DNA duplex. Introduces a single-strand break via transesterification at a target site in duplex DNA. The scissile phosphodiester is attacked by the catalytic tyrosine of the enzyme, resulting in the formation of a DNA-(5'-phosphotyrosyl)-enzyme intermediate and the expulsion of a 3'-OH DNA strand. The free DNA strand then undergoes passage around the unbroken strand, thus removing DNA supercoils. Finally, in the religation step, the DNA 3'-OH attacks the covalent intermediate to expel the active-site tyrosine and restore the DNA phosphodiester backbone. This Lactococcus lactis subsp. lactis (strain IL1403) (Streptococcus lactis) protein is DNA topoisomerase 1.